The primary structure comprises 180 residues: MGVTKKPDLNDPVLRAKLAKGMGHNYYGEPAWPNDLSYIFPVVILGTIACTIGLAVLEPSMIGEPANPFATPLEILPEWYFFPVFQILRTVPNKLLGVLLMGSVPAGSLTVPFLENVNQFQNPFRRPVATTVSLIGTAVALWLGIGAALPIDESLTLGLFQSNLIQLSNIKIFQFFYSYI.

3 helical membrane passes run 36–56 (LSYI…GLAV), 95–115 (LLGV…PFLE), and 131–151 (TVSL…ALPI).

It belongs to the cytochrome b family. PetD subfamily. The 4 large subunits of the cytochrome b6-f complex are cytochrome b6, subunit IV (17 kDa polypeptide, petD), cytochrome f and the Rieske protein, while the 4 small subunits are petG, petL, petM and petN. The complex functions as a dimer.

It is found in the plastid. It localises to the chloroplast thylakoid membrane. Component of the cytochrome b6-f complex, which mediates electron transfer between photosystem II (PSII) and photosystem I (PSI), cyclic electron flow around PSI, and state transitions. The sequence is that of Cytochrome b6-f complex subunit 4 from Pinus thunbergii (Japanese black pine).